We begin with the raw amino-acid sequence, 62 residues long: Photosystem II reaction center protein Z (62 aa).

A run of 2 helical transmembrane segments spans residues 8–28 (ALVA…VAYA) and 41–61 (WLGS…NFFV).

The protein belongs to the PsbZ family. As to quaternary structure, PSII is composed of 1 copy each of membrane proteins PsbA, PsbB, PsbC, PsbD, PsbE, PsbF, PsbH, PsbI, PsbJ, PsbK, PsbL, PsbM, PsbT, PsbX, PsbY, PsbZ, Psb30/Ycf12, peripheral proteins PsbO, CyanoQ (PsbQ), PsbU, PsbV and a large number of cofactors. It forms dimeric complexes.

It is found in the cellular thylakoid membrane. Functionally, may control the interaction of photosystem II (PSII) cores with the light-harvesting antenna, regulates electron flow through the 2 photosystem reaction centers. PSII is a light-driven water plastoquinone oxidoreductase, using light energy to abstract electrons from H(2)O, generating a proton gradient subsequently used for ATP formation. This Nostoc sp. (strain PCC 7120 / SAG 25.82 / UTEX 2576) protein is Photosystem II reaction center protein Z.